The sequence spans 70 residues: Protein SlyX homolog (70 aa).

This sequence belongs to the SlyX family.

In Shewanella baltica (strain OS155 / ATCC BAA-1091), this protein is Protein SlyX homolog.